The sequence spans 132 residues: MSDIPPDLHYTAEHEWVRRSGDDTVRVGITDFAQSALGDVVFVQLPEVGAQLTAGESFGEVESTKSVSDLYAPVSGTVTAVNTDLEGSPQLVNSDPYGAGWLLDVQVSDAAALESAITALLDAEAYRGTLTE.

The 83-residue stretch at 24–106 folds into the Lipoyl-binding domain; that stretch reads TVRVGITDFA…YGAGWLLDVQ (83 aa). Residue lysine 65 is modified to N6-lipoyllysine.

This sequence belongs to the GcvH family. As to quaternary structure, the glycine cleavage system is composed of four proteins: P, T, L and H. It depends on (R)-lipoate as a cofactor.

Its function is as follows. The glycine cleavage system catalyzes the degradation of glycine. The H protein shuttles the methylamine group of glycine from the P protein to the T protein. The polypeptide is Glycine cleavage system H protein (Mycobacterium avium (strain 104)).